Consider the following 701-residue polypeptide: Elongation factor G (701 aa).

Residues aspartate 8–leucine 286 form the tr-type G domain. Residues alanine 17 to threonine 24, aspartate 85 to histidine 89, and asparagine 139 to aspartate 142 contribute to the GTP site.

This sequence belongs to the TRAFAC class translation factor GTPase superfamily. Classic translation factor GTPase family. EF-G/EF-2 subfamily.

It is found in the cytoplasm. Functionally, catalyzes the GTP-dependent ribosomal translocation step during translation elongation. During this step, the ribosome changes from the pre-translocational (PRE) to the post-translocational (POST) state as the newly formed A-site-bound peptidyl-tRNA and P-site-bound deacylated tRNA move to the P and E sites, respectively. Catalyzes the coordinated movement of the two tRNA molecules, the mRNA and conformational changes in the ribosome. The protein is Elongation factor G of Herpetosiphon aurantiacus (strain ATCC 23779 / DSM 785 / 114-95).